The sequence spans 183 residues: Inosine triphosphate pyrophosphatase (183 aa).

8–13 (TGNKNK) provides a ligand contact to ITP. Glu36 serves as a coordination point for Mg(2+). ITP-binding positions include Lys48, 64–65 (DT), Lys81, 140–143 (FGWD), Lys161, and 166–167 (HR).

It belongs to the HAM1 NTPase family. As to quaternary structure, homodimer. It depends on Mg(2+) as a cofactor. Mn(2+) is required as a cofactor.

It is found in the cytoplasm. It localises to the nucleus. The catalysed reaction is ITP + H2O = IMP + diphosphate + H(+). It catalyses the reaction dITP + H2O = dIMP + diphosphate + H(+). It carries out the reaction XTP + H2O = XMP + diphosphate + H(+). Its function is as follows. Pyrophosphatase that hydrolyzes non-canonical purine nucleotides such as inosine triphosphate (ITP), deoxyinosine triphosphate (dITP) or xanthosine 5'-triphosphate (XTP) to their respective monophosphate derivatives. The enzyme does not distinguish between the deoxy- and ribose forms. Probably excludes non-canonical purines from RNA and DNA precursor pools, thus preventing their incorporation into RNA and DNA and avoiding chromosomal lesions. The sequence is that of Inosine triphosphate pyrophosphatase from Emericella nidulans (strain FGSC A4 / ATCC 38163 / CBS 112.46 / NRRL 194 / M139) (Aspergillus nidulans).